Reading from the N-terminus, the 69-residue chain is DNA-directed RNA polymerase subunit omega (69 aa).

The protein belongs to the RNA polymerase subunit omega family. In terms of assembly, the RNAP catalytic core consists of 2 alpha, 1 beta, 1 beta' and 1 omega subunit. When a sigma factor is associated with the core the holoenzyme is formed, which can initiate transcription.

It carries out the reaction RNA(n) + a ribonucleoside 5'-triphosphate = RNA(n+1) + diphosphate. Its function is as follows. Promotes RNA polymerase assembly. Latches the N- and C-terminal regions of the beta' subunit thereby facilitating its interaction with the beta and alpha subunits. The chain is DNA-directed RNA polymerase subunit omega from Geotalea daltonii (strain DSM 22248 / JCM 15807 / FRC-32) (Geobacter daltonii).